Here is a 431-residue protein sequence, read N- to C-terminus: Argininosuccinate lyase (431 aa).

The protein belongs to the lyase 1 family. Argininosuccinate lyase subfamily.

It is found in the cytoplasm. The enzyme catalyses 2-(N(omega)-L-arginino)succinate = fumarate + L-arginine. It functions in the pathway amino-acid biosynthesis; L-arginine biosynthesis; L-arginine from L-ornithine and carbamoyl phosphate: step 3/3. This is Argininosuccinate lyase from Stenotrophomonas maltophilia (strain K279a).